Consider the following 183-residue polypeptide: Ribosome maturation factor RimM (183 aa).

The region spanning 96–171 is the PRC barrel domain; the sequence is PDEFYDHELE…VALIDPPEGL (76 aa).

It belongs to the RimM family. Binds ribosomal protein uS19.

It localises to the cytoplasm. An accessory protein needed during the final step in the assembly of 30S ribosomal subunit, possibly for assembly of the head region. Essential for efficient processing of 16S rRNA. May be needed both before and after RbfA during the maturation of 16S rRNA. It has affinity for free ribosomal 30S subunits but not for 70S ribosomes. This Rhodococcus jostii (strain RHA1) protein is Ribosome maturation factor RimM.